We begin with the raw amino-acid sequence, 296 residues long: Chronophin (296 aa).

Asp-25 acts as the Nucleophile in catalysis. Residues Asp-25 and Asp-27 each contribute to the Mg(2+) site. The active-site Proton donor is Asp-27. Substrate-binding positions include 58 to 60 (SNN), His-182, and Lys-213. Asp-238 provides a ligand contact to Mg(2+).

The protein belongs to the HAD-like hydrolase superfamily. As to quaternary structure, homodimer. Requires Mg(2+) as cofactor. As to expression, ubiquitously expressed (at protein level). Highly expressed in all the regions of central nerve system except the spinal cord. Also expressed at high level in liver and testis. In fetus, it is weakly expressed in all organs except brain.

The protein resides in the cytoplasm. Its subcellular location is the cytosol. The protein localises to the cytoskeleton. It localises to the cell projection. It is found in the ruffle membrane. The protein resides in the lamellipodium membrane. Its subcellular location is the cell membrane. It carries out the reaction pyridoxal 5'-phosphate + H2O = pyridoxal + phosphate. The enzyme catalyses pyridoxine 5'-phosphate + H2O = pyridoxine + phosphate. It catalyses the reaction pyridoxamine + phosphate = pyridoxamine 5'-phosphate + H2O. The catalysed reaction is O-phospho-L-seryl-[protein] + H2O = L-seryl-[protein] + phosphate. Its activity is regulated as follows. Inhibited by NaF, Zn(2+), Ca(2+), Mn(2+) and EDTA. Functions as a pyridoxal phosphate (PLP) phosphatase, which also catalyzes the dephosphorylation of pyridoxine 5'-phosphate (PNP) and pyridoxamine 5'-phosphate (PMP), with order of substrate preference PLP &gt; PNP &gt; PMP and therefore plays a role in vitamin B6 metabolism. Also functions as a protein serine phosphatase that specifically dephosphorylates 'Ser-3' in proteins of the actin-depolymerizing factor (ADF)/cofilin family like CFL1 and DSTN. Thereby, regulates cofilin-dependent actin cytoskeleton reorganization, being required for normal progress through mitosis and normal cytokinesis. Does not dephosphorylate phosphothreonines in LIMK1. Does not dephosphorylate peptides containing phosphotyrosine. The polypeptide is Chronophin (Homo sapiens (Human)).